A 492-amino-acid polypeptide reads, in one-letter code: Protein GvpD2 (492 aa).

39–46 (GAPGTGKT) contacts ATP. The segment covering 355–368 (RDHDDAVDPDRLPG) has biased composition (basic and acidic residues). The interval 355-379 (RDHDDAVDPDRLPGHDTTPTEHGTL) is disordered.

Belongs to the gas vesicle GvpD family. In terms of assembly, homodimer. Interacts with GvpE, also with GvpE from H.mediterranei.

It localises to the cytoplasm. Causes a decrease in the amount of GvpE protein. Gas vesicles are hollow, gas filled proteinaceous nanostructures found in several microbial planktonic microorganisms. They allow positioning of halobacteria at the optimal depth for growth in the poorly aerated, shallow brine pools of their habitat. Its function is as follows. Expression of 2 c-vac DNA fragments containing 2 divergently transcribed regions (gvpE-gvpF-gvpG-gvpH-gvpI-gvpJ-gvpK-gvpL-gvpM and gvpA-gvpC-gvpN-gvpO) allows H.volcanii to produce gas vesicles. The polypeptide is Protein GvpD2 (Halobacterium salinarum (strain ATCC 700922 / JCM 11081 / NRC-1) (Halobacterium halobium)).